A 287-amino-acid chain; its full sequence is Protease HtpX (287 aa).

The next 2 membrane-spanning stretches (helical) occupy residues 4 to 24 and 37 to 57; these read VLLF…VFNI and VGLL…SLWI. His143 serves as a coordination point for Zn(2+). Glu144 is a catalytic residue. His147 is a Zn(2+) binding site. Transmembrane regions (helical) follow at residues 158 to 178 and 194 to 214; these read LIQG…ASAI and GVVM…VMWF. Glu219 lines the Zn(2+) pocket.

It belongs to the peptidase M48B family. Requires Zn(2+) as cofactor.

It is found in the cell inner membrane. In Idiomarina loihiensis (strain ATCC BAA-735 / DSM 15497 / L2-TR), this protein is Protease HtpX.